Here is a 198-residue protein sequence, read N- to C-terminus: Recombination protein RecR (198 aa).

A C4-type zinc finger spans residues 56–71; that stretch reads CKICHSLTENEICDIC. The Toprim domain occupies 79–174; that stretch reads HLLCVVESPA…HMTRIAQGVP (96 aa).

This sequence belongs to the RecR family.

Functionally, may play a role in DNA repair. It seems to be involved in an RecBC-independent recombinational process of DNA repair. It may act with RecF and RecO. The chain is Recombination protein RecR from Acinetobacter baylyi (strain ATCC 33305 / BD413 / ADP1).